Reading from the N-terminus, the 510-residue chain is Aspartate kinase FUB3 (510 aa).

2 ACT domains span residues 372–440 and 446–510; these read ILSN…VLPD and LVGA…KNAI.

It belongs to the aspartokinase family.

It carries out the reaction L-aspartate + ATP = 4-phospho-L-aspartate + ADP. Its pathway is mycotoxin biosynthesis. Aspartate kinase; part of the gene cluster that mediates the biosynthesis of fusaric acid, a mycotoxin with low to moderate toxicity to animals and humans, but with high phytotoxic properties. L-aspartate is suggested as fusaric acid amino acid precursor that is activated and further processed to O-acetyl-L-homoserine by cluster enzymes aspartate kinase FUB3 and homoserine O-acetyltransferase FUB5, as well as enzymes of the primary metabolism. The polyketide synthase (PKS) FUB1 generates the triketide trans-2-hexenal which is presumptively released by the hydrolase FUB4 and linked to the NRPS-bound amino acid precursor by NAD(P)-dependent dehydrogenase FUB6. FUB1, FUB4, and the non-canonical NRPS Fub8 may form an enzyme complex. Further processing of the NRPS-bound intermediate might be carried out by FUB6 and the sulfhydrylase FUB7, enabling a spontaneous electrocyclization to close the carbon backbone of fusaric acid. Dihydrofusaric acid is likely to be released via reduction by the thioester reductase (TR) domain of FUB8 whereupon the final oxidation to fusaric acid may (also) be performed by the FMN-dependent dehydrogenase FUB9. The protein is Aspartate kinase FUB3 of Gibberella fujikuroi (strain CBS 195.34 / IMI 58289 / NRRL A-6831) (Bakanae and foot rot disease fungus).